The sequence spans 433 residues: Homogentisate 1,2-dioxygenase (433 aa).

Histidine 288 (proton acceptor) is an active-site residue. Fe cation contacts are provided by histidine 331 and glutamate 337. 2 residues coordinate homogentisate: tyrosine 346 and histidine 367. Position 367 (histidine 367) interacts with Fe cation.

It belongs to the homogentisate dioxygenase family. In terms of assembly, hexamer; dimer of trimers. It depends on Fe cation as a cofactor.

The enzyme catalyses homogentisate + O2 = 4-maleylacetoacetate + H(+). It participates in amino-acid degradation; L-phenylalanine degradation; acetoacetate and fumarate from L-phenylalanine: step 4/6. Its function is as follows. Involved in the catabolism of homogentisate (2,5-dihydroxyphenylacetate or 2,5-OH-PhAc), a central intermediate in the degradation of phenylalanine and tyrosine. Catalyzes the oxidative ring cleavage of the aromatic ring of homogentisate to yield maleylacetoacetate. This chain is Homogentisate 1,2-dioxygenase, found in Pseudomonas entomophila (strain L48).